A 314-amino-acid chain; its full sequence is Ribosomal RNA small subunit methyltransferase H (314 aa).

S-adenosyl-L-methionine-binding positions include glycine 33–histidine 35, aspartate 52, phenylalanine 84, aspartate 105, and glutamine 112.

The protein belongs to the methyltransferase superfamily. RsmH family.

Its subcellular location is the cytoplasm. The enzyme catalyses cytidine(1402) in 16S rRNA + S-adenosyl-L-methionine = N(4)-methylcytidine(1402) in 16S rRNA + S-adenosyl-L-homocysteine + H(+). Its function is as follows. Specifically methylates the N4 position of cytidine in position 1402 (C1402) of 16S rRNA. The chain is Ribosomal RNA small subunit methyltransferase H from Lactobacillus delbrueckii subsp. bulgaricus (strain ATCC 11842 / DSM 20081 / BCRC 10696 / JCM 1002 / NBRC 13953 / NCIMB 11778 / NCTC 12712 / WDCM 00102 / Lb 14).